We begin with the raw amino-acid sequence, 284 residues long: Tropomyosin Tod p 1.0102 (284 aa).

Residues 15–273 adopt a coiled-coil conformation; it reads KEVATDKAEQ…KERYKSISDE (259 aa). A disordered region spans residues 103-136; it reads EERLTSAQSKLEDASKAADESERGRKVLENRSQG.

The protein belongs to the tropomyosin family. Homodimer. Post-translationally, the N-terminus is blocked. Expressed in mantle muscle (at protein level).

In terms of biological role, tropomyosin, in association with the troponin complex, plays a central role in the calcium dependent regulation of muscle contraction. The chain is Tropomyosin Tod p 1.0102 from Todarodes pacificus (Japanese flying squid).